A 487-amino-acid chain; its full sequence is MGLQLALLLAGIVALSDSARGPPRIADKVIHRQSVRLGRTIKLLCPVEGDPPPLTMWMKDGRTIHSGWTRFRILQQGLKIKEVESEDAGTYICKATNGFGSTNVNYTLIVIDDTSSGKNSQTPEGSNGEYEDHSGKQWAQPRFTQPAKMRRRVIARPVGSSIRLKCVASGNPRPDITWLKDNKPLMPHEIGENKKKKWTLNLKNLKPEDSGKYTCRVFNKVGEINATYKVEVIQRTRSKPILTGTHPVNTTVDYGGTTSFQCKVRSDVKPVIQWLKRVEYGTESKYNSTIDVGGQKFVVLPTGEVWSRPDGSYLNKLMITRAKEEDAGMYICLGANTMGYSFRSAFLTVLPDPKPPSAPVPPSSVSSLPWPVIIGIPAGAVFIFGTILLWLCQTKKKPCSPPAAAPVHRPQPRDRICVSQVPDKDCISSINYEEYVAQQQHLLSQGPALAPAMASKMYPKIYTDIHTHTHSHVEGKVHQHQHIQYQC.

The first 18 residues, 1-18 (MGLQLALLLAGIVALSDS), serve as a signal peptide directing secretion. Over 19-371 (ARGPPRIADK…PSSVSSLPWP (353 aa)) the chain is Extracellular. Residues 23-109 (PRIADKVIHR…GSTNVNYTLI (87 aa)) enclose the Ig-like C2-type 1 domain. An intrachain disulfide couples C45 to C93. N-linked (GlcNAc...) asparagine glycosylation is present at N105. The span at 115-125 (SSGKNSQTPEG) shows a compositional bias: polar residues. The segment at 115-147 (SSGKNSQTPEGSNGEYEDHSGKQWAQPRFTQPA) is disordered. 2 consecutive Ig-like C2-type domains span residues 141–231 (PRFT…YKVE) and 240–348 (PILT…AFLT). C166 and C215 form a disulfide bridge. N225, N249, and N287 each carry an N-linked (GlcNAc...) asparagine glycan. C262 and C332 are disulfide-bonded. The helical transmembrane segment at 372 to 392 (VIIGIPAGAVFIFGTILLWLC) threads the bilayer. Over 393–487 (QTKKKPCSPP…HQHQHIQYQC (95 aa)) the chain is Cytoplasmic.

Interacts with heparin and FGF2. Expressed in cartilaginous structures.

The protein localises to the cell membrane. In terms of biological role, has a negative effect on cell proliferation. This is Fibroblast growth factor receptor-like 1 (FGFRL1) from Gallus gallus (Chicken).